Consider the following 747-residue polypeptide: Threonine synthase-like 1 (747 aa).

Position 351 is an N6-(pyridoxal phosphate)lysine (Lys351).

Belongs to the threonine synthase family. It depends on pyridoxal 5'-phosphate as a cofactor.

The chain is Threonine synthase-like 1 (Thnsl1) from Mus musculus (Mouse).